The following is an 85-amino-acid chain: Small ribosomal subunit protein bS18 (85 aa).

This sequence belongs to the bacterial ribosomal protein bS18 family. In terms of assembly, part of the 30S ribosomal subunit. Forms a tight heterodimer with protein bS6.

Its function is as follows. Binds as a heterodimer with protein bS6 to the central domain of the 16S rRNA, where it helps stabilize the platform of the 30S subunit. The protein is Small ribosomal subunit protein bS18 of Helicobacter pylori (strain P12).